An 872-amino-acid polypeptide reads, in one-letter code: Probable LRR receptor-like serine/threonine-protein kinase At1g51880 (872 aa).

Positions 1 to 23 (MKSIHGFLLFLITAYVILESVQA) are cleaved as a signal peptide. Residues 24 to 513 (QDQLGFISLD…GKSKKVPMIP (490 aa)) are Extracellular-facing. N-linked (GlcNAc...) asparagine glycans are attached at residues asparagine 40, asparagine 49, asparagine 96, asparagine 181, asparagine 255, asparagine 268, asparagine 294, asparagine 339, and asparagine 401. LRR repeat units lie at residues 411–434 (RIIS…SKLT), 435–457 (QLIE…FADM), and 459–482 (LLKL…IQQR). 2 N-linked (GlcNAc...) asparagine glycosylation sites follow: asparagine 464 and asparagine 472. A helical transmembrane segment spans residues 514-534 (IVASVAGVFALLVILAIFFVV). Residues 535 to 872 (RRKNGESNKG…SASEFSPGAR (338 aa)) lie on the Cytoplasmic side of the membrane. A Phosphothreonine modification is found at threonine 557. The region spanning 566–838 (NNFERVLGKG…HVVTELNECV (273 aa)) is the Protein kinase domain. ATP contacts are provided by residues 572–580 (LGKGGFGTV) and lysine 593. At tyrosine 638 the chain carries Phosphotyrosine. Aspartate 690 acts as the Proton acceptor in catalysis. Serine 724 carries the post-translational modification Phosphoserine. Phosphothreonine is present on residues threonine 725 and threonine 730. Tyrosine 738 is subject to Phosphotyrosine.

The protein belongs to the protein kinase superfamily. Ser/Thr protein kinase family.

It localises to the membrane. The catalysed reaction is L-seryl-[protein] + ATP = O-phospho-L-seryl-[protein] + ADP + H(+). It catalyses the reaction L-threonyl-[protein] + ATP = O-phospho-L-threonyl-[protein] + ADP + H(+). The polypeptide is Probable LRR receptor-like serine/threonine-protein kinase At1g51880 (Arabidopsis thaliana (Mouse-ear cress)).